A 270-amino-acid chain; its full sequence is tRNA pseudouridine synthase A (270 aa).

The Nucleophile role is filled by D51. Position 109 (Y109) interacts with substrate.

It belongs to the tRNA pseudouridine synthase TruA family. Homodimer.

It catalyses the reaction uridine(38/39/40) in tRNA = pseudouridine(38/39/40) in tRNA. Its function is as follows. Formation of pseudouridine at positions 38, 39 and 40 in the anticodon stem and loop of transfer RNAs. The sequence is that of tRNA pseudouridine synthase A from Burkholderia lata (strain ATCC 17760 / DSM 23089 / LMG 22485 / NCIMB 9086 / R18194 / 383).